The sequence spans 172 residues: ATP synthase subunit b (172 aa).

The chain crosses the membrane as a helical span at residues 27-47 (LAIVIFGLYKFLPPFIGGILE).

This sequence belongs to the ATPase B chain family. As to quaternary structure, F-type ATPases have 2 components, F(1) - the catalytic core - and F(0) - the membrane proton channel. F(1) has five subunits: alpha(3), beta(3), gamma(1), delta(1), epsilon(1). F(0) has four main subunits: a(1), b(1), b'(1) and c(10-14). The alpha and beta chains form an alternating ring which encloses part of the gamma chain. F(1) is attached to F(0) by a central stalk formed by the gamma and epsilon chains, while a peripheral stalk is formed by the delta, b and b' chains.

Its subcellular location is the cellular thylakoid membrane. Functionally, f(1)F(0) ATP synthase produces ATP from ADP in the presence of a proton or sodium gradient. F-type ATPases consist of two structural domains, F(1) containing the extramembraneous catalytic core and F(0) containing the membrane proton channel, linked together by a central stalk and a peripheral stalk. During catalysis, ATP synthesis in the catalytic domain of F(1) is coupled via a rotary mechanism of the central stalk subunits to proton translocation. In terms of biological role, component of the F(0) channel, it forms part of the peripheral stalk, linking F(1) to F(0). The sequence is that of ATP synthase subunit b from Prochlorococcus marinus (strain MIT 9313).